Consider the following 406-residue polypeptide: Vitamin D3 dihydroxylase (406 aa).

Residues 1–15 show a composition bias toward low complexity; it reads MTDTATTPQTTDAPA. The disordered stretch occupies residues 1 to 24; that stretch reads MTDTATTPQTTDAPAFPSNRSCPY. Residue T81 coordinates calciol. Residues H103 and R107 each contribute to the heme site. Residues R193, S236, and I293 each contribute to the calciol site. Residues R297, H353, and C355 each contribute to the heme site.

This sequence belongs to the cytochrome P450 family. Heme is required as a cofactor.

The protein resides in the cytoplasm. It carries out the reaction calciol + 2 reduced [2Fe-2S]-[ferredoxin] + O2 + 2 H(+) = calcidiol + 2 oxidized [2Fe-2S]-[ferredoxin] + H2O. The catalysed reaction is calcidiol + 2 reduced [2Fe-2S]-[ferredoxin] + O2 + 2 H(+) = calcitriol + 2 oxidized [2Fe-2S]-[ferredoxin] + H2O. Its function is as follows. Involved in the metabolism of vitamin D3 (calciol) and of a number of sulfonylurea herbicides. Catalyzes the two-step hydroxylation (25- and 1-alpha-hydroxylation) of vitamin D3 (VD3) to yield its active form 1-alpha,25-dihydroxyvitamin D3 (calcitriol). The first step is the hydroxylation of the C-25 position of VD3 to produce 25-hydroxyvitamin D3 (calcidiol). The second reaction is the hydroxylation of the C1-alpha-position of calcidiol to produce calcitriol. It can also hydroxylate vitamin D2. In Streptomyces griseolus, this protein is Vitamin D3 dihydroxylase.